An 827-amino-acid chain; its full sequence is Probable inorganic carbon transporter subunit DabA2 (827 aa).

The Zn(2+) site is built by cysteine 351, aspartate 353, histidine 524, and cysteine 539.

Belongs to the inorganic carbon transporter (TC 9.A.2) DabA family. Forms a complex with DabB2, possibly a heterodimer. The cofactor is Zn(2+).

The protein resides in the cell inner membrane. With respect to regulation, uptake of inorganic carbon by cells in the presence of thiosulphate is fully inhibited by the uncouplers carbonyl cyanide m-chlorophenyl hydrazone (CCCP), carbonyl cyanide p-trifluoromethoxyphenyl hydrazone (FCCP), S13 or SF6847. Not inhibited by the ATPase inhibitor N,N-dicyclohexylcarbodiimide (DCCD). Inorganic carbon uptake is inhibited by the ionophore CCCP, suggesting uptake is coupled to a cation gradient. Functionally, part of an energy-coupled inorganic carbon pump; its substrate may be carbon dioxide. Expression of both dabA2 and dabB2 (DAB2) restores growth in ambient air to E.coli deleted of its carbonic anhydrase genes (called CAfree, deletion of 'can' and 'cynT'); neither dabA2 or dabB2 alone is sufficient. Rescue is pH-independent, suggesting it transports CO(2) and not carbonate ions. Together the genes allow greater than normal uptake of inorganic carbon by E.coli. Uptake of carbon dioxide rather than bicarbonate has been suggested based on kinetic calculations. The chain is Probable inorganic carbon transporter subunit DabA2 from Halothiobacillus neapolitanus (strain ATCC 23641 / c2) (Thiobacillus neapolitanus).